Here is a 298-residue protein sequence, read N- to C-terminus: Mitochondrial nicotinamide adenine dinucleotide transporter SLC25A51 (298 aa).

A compositionally biased stretch (basic and acidic residues) spans 1-11 (MMDSEAHEKRP). Positions 1-21 (MMDSEAHEKRPPMLTSSNQDL) are disordered. Solcar repeat units lie at residues 28-108 (VGDM…LSRL), 117-201 (PEFA…IKES), and 214-297 (NDFI…LLKI). Helical transmembrane passes span 36–56 (CGYC…KILF), 85–105 (LPPL…YEDL), 119–139 (FATR…LTPF), 180–200 (ILFR…PIKE), 216–236 (FICG…INVV), and 269–290 (LFRG…INAT).

It belongs to the mitochondrial carrier (TC 2.A.29) family.

It localises to the mitochondrion inner membrane. The enzyme catalyses NAD(+)(in) = NAD(+)(out). Mitochondrial membrane carrier protein that mediates the import of NAD(+) into mitochondria. Mitochondrial NAD(+) is required for glycolysis and mitochondrial respiration. Compared to SLC25A52, SLC25A51-mediated transport is essential for the import of NAD(+) in mitochondria. The transport mechanism, uniport or antiport, its electrogenicity and substrate selectivity, remain to be elucidated. In Mus musculus (Mouse), this protein is Mitochondrial nicotinamide adenine dinucleotide transporter SLC25A51.